Consider the following 218-residue polypeptide: Thiamine-phosphate synthase (218 aa).

Residues 36–40 (QVRSK) and D70 each bind 4-amino-2-methyl-5-(diphosphooxymethyl)pyrimidine. Mg(2+) is bound by residues D71 and D94. T113 contacts 4-amino-2-methyl-5-(diphosphooxymethyl)pyrimidine. 141 to 143 (TPT) provides a ligand contact to 2-[(2R,5Z)-2-carboxy-4-methylthiazol-5(2H)-ylidene]ethyl phosphate. K144 provides a ligand contact to 4-amino-2-methyl-5-(diphosphooxymethyl)pyrimidine.

Belongs to the thiamine-phosphate synthase family. Mg(2+) is required as a cofactor.

It carries out the reaction 2-[(2R,5Z)-2-carboxy-4-methylthiazol-5(2H)-ylidene]ethyl phosphate + 4-amino-2-methyl-5-(diphosphooxymethyl)pyrimidine + 2 H(+) = thiamine phosphate + CO2 + diphosphate. The catalysed reaction is 2-(2-carboxy-4-methylthiazol-5-yl)ethyl phosphate + 4-amino-2-methyl-5-(diphosphooxymethyl)pyrimidine + 2 H(+) = thiamine phosphate + CO2 + diphosphate. It catalyses the reaction 4-methyl-5-(2-phosphooxyethyl)-thiazole + 4-amino-2-methyl-5-(diphosphooxymethyl)pyrimidine + H(+) = thiamine phosphate + diphosphate. It participates in cofactor biosynthesis; thiamine diphosphate biosynthesis; thiamine phosphate from 4-amino-2-methyl-5-diphosphomethylpyrimidine and 4-methyl-5-(2-phosphoethyl)-thiazole: step 1/1. Its function is as follows. Condenses 4-methyl-5-(beta-hydroxyethyl)thiazole monophosphate (THZ-P) and 2-methyl-4-amino-5-hydroxymethyl pyrimidine pyrophosphate (HMP-PP) to form thiamine monophosphate (TMP). The protein is Thiamine-phosphate synthase of Corynebacterium jeikeium (strain K411).